The sequence spans 269 residues: MTPLRILISNDDGVLAEGVRCLAAAAASRGHKVTVVCPDHERSATGHGLTIHTPIRAERVDELYGPGVTAWSCSGTPADCVKLALSELLAEKPDLVLSGVNHGPNLGTDVFCSGTVAAAMEGTLEGLPALAVSVACFQWRDFQAAAELAMDVAENALADNWPNNLLLNLNIPPCHPEQMGSLRWTRLSIRHYEEQFSRRVDPHSRTYFWLAGEVVKDLETAGDGPRDWPSDVAQIETNSPSLTPIQPDLFWRGDLSALPAACVANQPVR.

4 residues coordinate a divalent metal cation: Asp-11, Asp-12, Ser-43, and Asn-101.

This sequence belongs to the SurE nucleotidase family. The cofactor is a divalent metal cation.

Its subcellular location is the cytoplasm. It catalyses the reaction a ribonucleoside 5'-phosphate + H2O = a ribonucleoside + phosphate. Nucleotidase that shows phosphatase activity on nucleoside 5'-monophosphates. The polypeptide is 5'-nucleotidase SurE (Prochlorococcus marinus (strain MIT 9303)).